The sequence spans 232 residues: 2-C-methyl-D-erythritol 4-phosphate cytidylyltransferase (232 aa).

This sequence belongs to the IspD/TarI cytidylyltransferase family. IspD subfamily.

It catalyses the reaction 2-C-methyl-D-erythritol 4-phosphate + CTP + H(+) = 4-CDP-2-C-methyl-D-erythritol + diphosphate. The protein operates within isoprenoid biosynthesis; isopentenyl diphosphate biosynthesis via DXP pathway; isopentenyl diphosphate from 1-deoxy-D-xylulose 5-phosphate: step 2/6. Catalyzes the formation of 4-diphosphocytidyl-2-C-methyl-D-erythritol from CTP and 2-C-methyl-D-erythritol 4-phosphate (MEP). The protein is 2-C-methyl-D-erythritol 4-phosphate cytidylyltransferase of Shewanella frigidimarina (strain NCIMB 400).